The primary structure comprises 101 residues: NADH-quinone oxidoreductase subunit K (101 aa).

Helical transmembrane passes span 4-24 (LAHF…GIFL), 30-50 (IVLL…FVAF), and 61-81 (VFVF…LAIL).

It belongs to the complex I subunit 4L family. In terms of assembly, NDH-1 is composed of 14 different subunits. Subunits NuoA, H, J, K, L, M, N constitute the membrane sector of the complex.

Its subcellular location is the cell inner membrane. It carries out the reaction a quinone + NADH + 5 H(+)(in) = a quinol + NAD(+) + 4 H(+)(out). Its function is as follows. NDH-1 shuttles electrons from NADH, via FMN and iron-sulfur (Fe-S) centers, to quinones in the respiratory chain. The immediate electron acceptor for the enzyme in this species is believed to be ubiquinone. Couples the redox reaction to proton translocation (for every two electrons transferred, four hydrogen ions are translocated across the cytoplasmic membrane), and thus conserves the redox energy in a proton gradient. This is NADH-quinone oxidoreductase subunit K from Cupriavidus metallidurans (strain ATCC 43123 / DSM 2839 / NBRC 102507 / CH34) (Ralstonia metallidurans).